The sequence spans 368 residues: Glutamate 5-kinase (368 aa).

Lysine 11 serves as a coordination point for ATP. Substrate contacts are provided by serine 51, aspartate 138, and asparagine 150. ATP contacts are provided by residues 170–171 (TD) and 212–218 (TGGMATK). The 79-residue stretch at 276–354 (AGEIIVDHGA…QQISQILGYE (79 aa)) folds into the PUA domain.

The protein belongs to the glutamate 5-kinase family.

Its subcellular location is the cytoplasm. It catalyses the reaction L-glutamate + ATP = L-glutamyl 5-phosphate + ADP. Its pathway is amino-acid biosynthesis; L-proline biosynthesis; L-glutamate 5-semialdehyde from L-glutamate: step 1/2. Its function is as follows. Catalyzes the transfer of a phosphate group to glutamate to form L-glutamate 5-phosphate. The sequence is that of Glutamate 5-kinase from Photorhabdus laumondii subsp. laumondii (strain DSM 15139 / CIP 105565 / TT01) (Photorhabdus luminescens subsp. laumondii).